We begin with the raw amino-acid sequence, 168 residues long: Putative F-box protein At1g30945 (168 aa).

Residues 5 to 52 (KTFDSISNDLFLEILLRLSTKSIDRSRCVSKQWASILCSQDFTESEKF) form the F-box domain.

In Arabidopsis thaliana (Mouse-ear cress), this protein is Putative F-box protein At1g30945.